Reading from the N-terminus, the 642-residue chain is 1-deoxy-D-xylulose-5-phosphate synthase (642 aa).

Residues H79 and G120–S122 contribute to the thiamine diphosphate site. Residue D151 coordinates Mg(2+). Thiamine diphosphate contacts are provided by residues G152–S153, N180, Y290, and E372. N180 serves as a coordination point for Mg(2+).

Belongs to the transketolase family. DXPS subfamily. Homodimer. Mg(2+) serves as cofactor. It depends on thiamine diphosphate as a cofactor.

It catalyses the reaction D-glyceraldehyde 3-phosphate + pyruvate + H(+) = 1-deoxy-D-xylulose 5-phosphate + CO2. It participates in metabolic intermediate biosynthesis; 1-deoxy-D-xylulose 5-phosphate biosynthesis; 1-deoxy-D-xylulose 5-phosphate from D-glyceraldehyde 3-phosphate and pyruvate: step 1/1. Its function is as follows. Catalyzes the acyloin condensation reaction between C atoms 2 and 3 of pyruvate and glyceraldehyde 3-phosphate to yield 1-deoxy-D-xylulose-5-phosphate (DXP). The protein is 1-deoxy-D-xylulose-5-phosphate synthase of Rhodospirillum centenum (strain ATCC 51521 / SW).